The chain runs to 332 residues: Glycerol-3-phosphate dehydrogenase [NAD(P)+] (332 aa).

NADPH contacts are provided by tryptophan 13, lysine 34, and lysine 108. Residues lysine 108, glycine 136, and serine 138 each contribute to the sn-glycerol 3-phosphate site. Alanine 140 is a binding site for NADPH. Sn-glycerol 3-phosphate-binding residues include lysine 191, aspartate 244, serine 254, arginine 255, and asparagine 256. The active-site Proton acceptor is lysine 191. An NADPH-binding site is contributed by arginine 255. NADPH is bound by residues valine 279 and glutamate 281.

The protein belongs to the NAD-dependent glycerol-3-phosphate dehydrogenase family.

The protein resides in the cytoplasm. The enzyme catalyses sn-glycerol 3-phosphate + NAD(+) = dihydroxyacetone phosphate + NADH + H(+). The catalysed reaction is sn-glycerol 3-phosphate + NADP(+) = dihydroxyacetone phosphate + NADPH + H(+). It functions in the pathway membrane lipid metabolism; glycerophospholipid metabolism. Catalyzes the reduction of the glycolytic intermediate dihydroxyacetone phosphate (DHAP) to sn-glycerol 3-phosphate (G3P), the key precursor for phospholipid synthesis. The sequence is that of Glycerol-3-phosphate dehydrogenase [NAD(P)+] from Francisella tularensis subsp. novicida (strain U112).